The primary structure comprises 199 residues: Gamma-glutamylcyclotransferase 2-3 (199 aa).

Substrate is bound at residue 5–10 (VFGYGS). Residue Glu-86 is the Proton acceptor of the active site.

Belongs to the gamma-glutamylcyclotransferase family. The cofactor is Mn(2+).

The protein localises to the cytoplasm. The catalysed reaction is glutathione = L-cysteinylglycine + 5-oxo-L-proline. Its function is as follows. Converts GSH to 5-oxoproline and cysteine-glycine (Cys-Gly) dipeptide in vitro and plays a significant role in glutathione (GSH) homeostasis. Has no activity towards gamma-glutamyl-L-cysteine but possesses very low activity towards gamma-glutamyl-L-alanine. This chain is Gamma-glutamylcyclotransferase 2-3, found in Arabidopsis thaliana (Mouse-ear cress).